The sequence spans 301 residues: GTPase Era (301 aa).

The region spanning 8 to 174 is the Era-type G domain; the sequence is KSGFVALVGR…LKTLKDYLPE (167 aa). The G1 stretch occupies residues 16-23; it reads GRPNVGKS. 16–23 is a binding site for GTP; it reads GRPNVGKS. Residues 42–46 are G2; sequence QTTRN. The G3 stretch occupies residues 63–66; it reads DTPG. Residues 63–67 and 124–127 each bind GTP; these read DTPGI and NKID. The segment at 124–127 is G4; sequence NKID. Residues 153 to 155 form a G5 region; that stretch reads ISA. The region spanning 197-282 is the KH type-2 domain; sequence IREQILRLTD…NLKLWVKVRR (86 aa).

The protein belongs to the TRAFAC class TrmE-Era-EngA-EngB-Septin-like GTPase superfamily. Era GTPase family. In terms of assembly, monomer.

The protein localises to the cytoplasm. It localises to the cell membrane. Functionally, an essential GTPase that binds both GDP and GTP, with rapid nucleotide exchange. Plays a role in 16S rRNA processing and 30S ribosomal subunit biogenesis and possibly also in cell cycle regulation and energy metabolism. This is GTPase Era from Lactobacillus delbrueckii subsp. bulgaricus (strain ATCC 11842 / DSM 20081 / BCRC 10696 / JCM 1002 / NBRC 13953 / NCIMB 11778 / NCTC 12712 / WDCM 00102 / Lb 14).